Here is a 1413-residue protein sequence, read N- to C-terminus: DNA-directed RNA polymerase subunit beta' (1413 aa).

Zn(2+) contacts are provided by Cys-70, Cys-72, Cys-85, and Cys-88. Mg(2+) contacts are provided by Asp-460, Asp-462, and Asp-464. Zn(2+) contacts are provided by Cys-814, Cys-888, Cys-895, and Cys-898.

It belongs to the RNA polymerase beta' chain family. In terms of assembly, the RNAP catalytic core consists of 2 alpha, 1 beta, 1 beta' and 1 omega subunit. When a sigma factor is associated with the core the holoenzyme is formed, which can initiate transcription. The cofactor is Mg(2+). Requires Zn(2+) as cofactor.

The catalysed reaction is RNA(n) + a ribonucleoside 5'-triphosphate = RNA(n+1) + diphosphate. DNA-dependent RNA polymerase catalyzes the transcription of DNA into RNA using the four ribonucleoside triphosphates as substrates. The polypeptide is DNA-directed RNA polymerase subunit beta' (Buchnera aphidicola subsp. Schizaphis graminum (strain Sg)).